Consider the following 60-residue polypeptide: MDPCDCSKSGTCNCGGSCTCTNCSCTTCKKSCCPCCPSGCTKCASGCVCKGKTCDTSCCQ.

The interval 1–28 (MDPCDCSKSGTCNCGGSCTCTNCSCTTC) is beta. Residues cysteine 4, cysteine 6, cysteine 12, cysteine 14, cysteine 18, cysteine 20, cysteine 23, cysteine 25, cysteine 28, cysteine 32, cysteine 33, cysteine 35, cysteine 36, cysteine 40, cysteine 43, cysteine 47, cysteine 49, cysteine 54, cysteine 58, and cysteine 59 each contribute to the a divalent metal cation site. The interval 29-60 (KKSCCPCCPSGCTKCASGCVCKGKTCDTSCCQ) is alpha.

The protein belongs to the metallothionein superfamily. Type 1 family.

Its function is as follows. Metallothioneins have a high content of cysteine residues that bind various heavy metals. This Dicentrarchus labrax (European seabass) protein is Metallothionein B (mtb).